A 193-amino-acid chain; its full sequence is Probable GTP-binding protein EngB (193 aa).

One can recognise an EngB-type G domain in the interval 19–188 (SVKEVCFMGR…HKQIFELFKA (170 aa)). Residues 27–34 (GRSNVGKS), 53–57 (GRTQL), 70–73 (DLPG), 136–139 (NKFD), and 167–169 (VSA) each bind GTP. Residues S34 and T55 each contribute to the Mg(2+) site.

The protein belongs to the TRAFAC class TrmE-Era-EngA-EngB-Septin-like GTPase superfamily. EngB GTPase family. The cofactor is Mg(2+).

Functionally, necessary for normal cell division and for the maintenance of normal septation. This is Probable GTP-binding protein EngB from Mycoplasma pneumoniae (strain ATCC 29342 / M129 / Subtype 1) (Mycoplasmoides pneumoniae).